The primary structure comprises 151 residues: Putative olfactory receptor 13C6 (151 aa).

At M1–T27 the chain is on the extracellular side. A glycan (N-linked (GlcNAc...) asparagine) is linked at N5. A helical membrane pass occupies residues F28 to L48. At M49 to Y61 the chain is on the cytoplasmic side. Residues F62–I82 traverse the membrane as a helical segment. Topologically, residues L83–V100 are extracellular. Residues Q101–F121 form a helical membrane-spanning segment.

The protein belongs to the G-protein coupled receptor 1 family.

It is found in the cell membrane. Its function is as follows. Odorant receptor. The polypeptide is Putative olfactory receptor 13C6 (Homo sapiens (Human)).